The chain runs to 533 residues: Retinoid isomerohydrolase (533 aa).

Serine 2 is subject to N-acetylserine. Residues threonine 101 and threonine 105 each carry the phosphothreonine modification. Cysteine 112 is lipidated: S-palmitoyl cysteine; in membrane form. Lysine 113 is modified (N6-acetyllysine). Serine 117 is modified (phosphoserine). Histidine 180 provides a ligand contact to Fe cation. Residue cysteine 231 is the site of S-palmitoyl cysteine; in membrane form attachment. Fe cation contacts are provided by histidine 241 and histidine 313. S-palmitoyl cysteine; in membrane form attachment occurs at residues cysteine 329 and cysteine 330. Residue histidine 527 participates in Fe cation binding.

This sequence belongs to the carotenoid oxygenase family. In terms of assembly, interacts with MYO7A; this mediates light-dependent intracellular transport of RPE65. Fe(2+) is required as a cofactor. In terms of processing, palmitoylation by LRAT regulates ligand binding specificity; the palmitoylated form (membrane form) specifically binds all-trans-retinyl-palmitate, while the soluble unpalmitoylated form binds all-trans-retinol (vitamin A). In terms of tissue distribution, retinal pigment epithelium specific.

The protein resides in the cytoplasm. Its subcellular location is the cell membrane. It is found in the microsome membrane. It catalyses the reaction an all-trans-retinyl ester + H2O = 11-cis-retinol + a fatty acid + H(+). The catalysed reaction is lutein = (3R,3'S)-zeaxanthin. It carries out the reaction all-trans-retinyl hexadecanoate + H2O = 11-cis-retinol + hexadecanoate + H(+). In terms of biological role, critical isomerohydrolase in the retinoid cycle involved in regeneration of 11-cis-retinal, the chromophore of rod and cone opsins. Catalyzes the cleavage and isomerization of all-trans-retinyl fatty acid esters to 11-cis-retinol which is further oxidized by 11-cis retinol dehydrogenase to 11-cis-retinal for use as visual chromophore. Essential for the production of 11-cis retinal for both rod and cone photoreceptors. Also capable of catalyzing the isomerization of lutein to meso-zeaxanthin an eye-specific carotenoid. The soluble form binds vitamin A (all-trans-retinol), making it available for LRAT processing to all-trans-retinyl ester. The membrane form, palmitoylated by LRAT, binds all-trans-retinyl esters, making them available for IMH (isomerohydrolase) processing to all-cis-retinol. The soluble form is regenerated by transferring its palmitoyl groups onto 11-cis-retinol, a reaction catalyzed by LRAT. This chain is Retinoid isomerohydrolase (RPE65), found in Chlorocebus aethiops (Green monkey).